A 246-amino-acid chain; its full sequence is V-type proton ATPase subunit D (246 aa).

It belongs to the V-ATPase D subunit family. As to quaternary structure, V-ATPase is a heteromultimeric enzyme made up of two complexes: the ATP-hydrolytic V1 complex and the proton translocation V0 complex. The V1 complex consists of three catalytic AB heterodimers that form a heterohexamer, three peripheral stalks each consisting of EG heterodimers, one central rotor including subunits D and F, and the regulatory subunits C and H. The proton translocation complex V0 consists of the proton transport subunit a, a ring of proteolipid subunits c9c'', rotary subunit d, subunits e and f, and the accessory subunits VhaAC45 and ATP6AP2.

Functionally, subunit of the V1 complex of vacuolar(H+)-ATPase (V-ATPase), a multisubunit enzyme composed of a peripheral complex (V1) that hydrolyzes ATP and a membrane integral complex (V0) that translocates protons. V-ATPase is responsible for acidifying and maintaining the pH of intracellular compartments and in some cell types, is targeted to the plasma membrane, where it is responsible for acidifying the extracellular environment. The sequence is that of V-type proton ATPase subunit D from Manduca sexta (Tobacco hawkmoth).